Consider the following 717-residue polypeptide: MTKLAQWMFEQYVKDLNLKNRGSPSFRKWLTLQPSLLRYSGVMRANAFDILKYGYPMQQSGYTVATLEIHFKNIRSSFANIYWNRDSEEPEYVCCCATYQSHDGEYRYRFVWYQPFIEAYNAIEAALDPLETIILNLIAARDLDFVVHIFPYNKGHEDYLASTQLILKIFIATLLMDILRIKDNTLDVHLNSDYIIVMERLWPHIKDAIEHFFEAHKDLLGYLIAFRNGGNFAGSLRPSCGQKIVPLTIREVLQMNDINLAVWREVFIMQECSDLVINGIAPCFPIFNTWTYLQGINQIFFENTSLQEKFKKDFIARELSKEIIKGQKTLNDKEFKKLSLHQIQYMESFLLMSDVAIMITTEYVGYTLQSLPGIISRSSYLSPIVKNILMDEDSFMSLLFDLCYGAYVLHKKENVIHADLHLNNMTYYHFNPTSFTDRNKPGKYTLKVKNPVIAFITGPKVETETYVFKHIDGFGCIIDFSRAIMGPNHAIKLERQYGLAFVNTFYRNQSEHILKVLRYYFPEMLTNRENEIQGVILSNFNFFFNSITAIDFYAIARNLRSMLSLDYLHTSEVKRNVEISQTFLDTCQFLEEKAVEFLFKNLHTVLSGKPVEKTAGDVLLPIVFKKFLYPNIPKNILRSFTVIDVYNYNNIKRYSGKAIQTFPPWAQTKEILTHAEGRTFEDIFPRGELVFKKAYAENNHLDKILQRIREQLANENL.

The protein belongs to the asfivirus C717R family.

Its subcellular location is the virion. This is an uncharacterized protein from African swine fever virus (strain Badajoz 1971 Vero-adapted) (Ba71V).